Here is a 188-residue protein sequence, read N- to C-terminus: MGVNKALIKQAVKQILVAIGEDPEREGLRRTPDRVANMLEELTNGREENVQYTLFEGSSNMVIVAGIRFSTLCEHHLLPMLGVTHVAYIPSDKVIGVSKIPRIVVKYSRMLQLQERLTRQIMNEVSSATGSGDVMVLTEAYHTCMMIRGVRSASPLVSMAYKGKFNDSSLRLEFLEYIRPFRLNKFLT.

Zn(2+) is bound by residues C73, H76, and C144.

Belongs to the GTP cyclohydrolase I family. As to quaternary structure, homomer.

It carries out the reaction GTP + H2O = 7,8-dihydroneopterin 3'-triphosphate + formate + H(+). It participates in cofactor biosynthesis; 7,8-dihydroneopterin triphosphate biosynthesis; 7,8-dihydroneopterin triphosphate from GTP: step 1/1. This is GTP cyclohydrolase 1 from Caldivirga maquilingensis (strain ATCC 700844 / DSM 13496 / JCM 10307 / IC-167).